The sequence spans 294 residues: UPF0761 membrane protein MADE_1017605/MADE_1018330 (294 aa).

6 helical membrane passes run 45 to 65, 99 to 119, 141 to 161, 182 to 202, 213 to 233, and 247 to 267; these read LLSL…FPAF, ASQM…MLIS, FAIY…SVVV, FLLS…LYMV, AFVG…GFAL, and ALAV…IVLF.

The protein belongs to the UPF0761 family.

The protein resides in the cell inner membrane. This chain is UPF0761 membrane protein MADE_1017605/MADE_1018330, found in Alteromonas mediterranea (strain DSM 17117 / CIP 110805 / LMG 28347 / Deep ecotype).